A 193-amino-acid polypeptide reads, in one-letter code: GTP cyclohydrolase 1 (193 aa).

Positions 73, 76, and 144 each coordinate Zn(2+).

It belongs to the GTP cyclohydrolase I family. Homomer.

It catalyses the reaction GTP + H2O = 7,8-dihydroneopterin 3'-triphosphate + formate + H(+). It functions in the pathway cofactor biosynthesis; 7,8-dihydroneopterin triphosphate biosynthesis; 7,8-dihydroneopterin triphosphate from GTP: step 1/1. In Hyperthermus butylicus (strain DSM 5456 / JCM 9403 / PLM1-5), this protein is GTP cyclohydrolase 1.